We begin with the raw amino-acid sequence, 177 residues long: Nuclear export protein (177 aa).

2 short sequence motifs (nuclear export signal) span residues 91-100 and 117-127; these read LWLPMKSLSL and MKHQILTRLKL.

In terms of assembly, binds M1 protein. May interact with human nucleoporins and exportin XPO1/CRM1.

It is found in the virion. The protein localises to the host nucleus. Its function is as follows. Mediates the nuclear export of encapsidated genomic RNAs (ribonucleoproteins, RNPs). Acts as an adapter between viral RNPs complexes and the nuclear export machinery of the cell. Possesses no intrinsic RNA-binding activity, but includes a C-terminal M1-binding domain. This domain is believed to allow recognition of RNPs to which the M1 protein is bound. Because the M1 protein is not available in large quantities until the later stages of infection, such an indirect recognition mechanism probably ensures that genomic RNPs are not exported from the nucleus before sufficient quantities of viral mRNA and progeny genomic RNA have been synthesized. Furthermore, the RNPs enters the cytoplasm only when they have associated with the M1 protein that is necessary to guide them to the plasma membrane. May down-regulate viral RNA synthesis when overproduced. The chain is Nuclear export protein (NS) from Homo sapiens (Human).